A 714-amino-acid chain; its full sequence is BRCA1-associated RING domain protein 1 (714 aa).

The segment at 25–63 adopts an RING-type zinc-finger fold; the sequence is CPLCLKLLNRPVLLPCDHVFCDSCVHKSSQVESGCPVCK. Disordered stretches follow at residues 106–165 and 254–283; these read YKND…QDWT and KAQN…DAME. Residues 118–134 show a composition bias toward basic and acidic residues; sequence KHGESEDSEMTDKDVSK. Residues 135 to 147 are compositionally biased toward low complexity; that stretch reads RSGGTDSSSRDGS. Basic and acidic residues-rich tracts occupy residues 155 to 165 and 264 to 283; these read SDPRPKHQDWT and SHTE…DAME. A C2HC pre-PHD-type zinc finger spans residues 331–382; the sequence is ITICGFCQSARVSEATGEMLHYSRGRPVDGDDIFRSNVIHVHSACIEWAPQV. The PHD-type zinc-finger motif lies at 402 to 451; the sequence is IKCTKCSLKGAALGCFVKSCRRSYHVPCAREISRCRWDYEDFLLLCPAHS. BRCT domains lie at 482-577 and 598-713; these read EQTP…PFEI and NKPK…HPVI.

In terms of assembly, component of a DNA-protein complex on WUS and WOX5 promoters. Interacts with SYD. Forms heterodimer with BRCA1. As to expression, expressed in the shoot apical meristem (SAM), roots, flowers, embryos and seedlings. Mostly expressed in flowers and siliques, and, to a lower extent, in roots, rosette leaves, inflorescence and young cauline leaves.

The protein localises to the nucleus. Binds specifically to H3K4me3 regions of target genes (e.g. WUS and WOX5) promoters to repress their transcription via chromatin remodeling. Required for the shoot apical meristem (SAM) organization and maintenance, by confining WUS expression to the organizing center, and for the quiescent center (QC) development in the root apical meristem (RAM), by repressing WOX5 expression in the root proximal meristem. Plays a role in DNA repair and in cell-cycle control. Required for the repair of DNA double-strand breaks (DSBs), both natural and induced by genotoxic stress, by homologous recombination (HR). The sequence is that of BRCA1-associated RING domain protein 1 from Arabidopsis thaliana (Mouse-ear cress).